A 543-amino-acid chain; its full sequence is EH domain-containing protein 2 (543 aa).

Phosphoserine occurs at positions 3 and 44. One can recognise a Dynamin-type G domain in the interval 55–286 (FDGKPMVLVA…DLFRDIQGLP (232 aa)). Residues 65 to 72 (GQYSTGKT) form a G1 motif region. 65 to 72 (GQYSTGKT) contributes to the ATP binding site. A G2 motif region spans residues 91 to 92 (EP). The segment at 153–156 (DTPG) is G3 motif. The G4 motif stretch occupies residues 219–222 (NKAD). K220 contributes to the ATP binding site. Residue V243 is a region of interest, G5 motif. An ATP-binding site is contributed by W258. Residues 320–340 (TVFGKENKKKQLILKLPVIFA) form a mediates membrane-binding region. Residues S438, S468, S470, S484, and S493 each carry the phosphoserine modification. Residues 449-537 (DKSKYDEIFY…RRLVPPSKRR (89 aa)) enclose the EH domain. In terms of domain architecture, EF-hand spans 481–516 (LPNSVLGRIWKLSDVDRDGMLDDEEFALASHLIEAK). Ca(2+) is bound by residues D494, D496, D498, M500, and E505. Positions 521–543 (GLPTNLPRRLVPPSKRRQKGSAE) are disordered. The segment covering 534 to 543 (SKRRQKGSAE) has biased composition (basic residues).

It belongs to the TRAFAC class dynamin-like GTPase superfamily. Dynamin/Fzo/YdjA family. EHD subfamily. Homodimer and homooligomer. Interacts with EHD1. May also interact with EHD3 and EHD4. Interacts with MYOF. Interacts with EHBP1. Interacts with FER1L5 (via second C2 domain). Interacts with CAV1 in a cholesterol-dependent manner. Interacts (via EH domain) with PACSIN2 (via NPF motifs); this interaction probably stabilizes the caveolae. As to expression, detected in lung and adipocytes. Detected at lower levels in heart and skeletal muscle.

The protein resides in the cell membrane. It localises to the membrane. The protein localises to the caveola. Its subcellular location is the endosome membrane. It is found in the cytoplasm. The protein resides in the cytosol. Its activity is regulated as follows. The very low intrinsic ATPase activity is increased upon interaction with liposomes. Functionally, ATP- and membrane-binding protein that controls membrane reorganization/tubulation upon ATP hydrolysis. Plays a role in membrane trafficking between the plasma membrane and endosomes. Important for the internalization of GLUT4. Required for fusion of myoblasts to skeletal muscle myotubes. Required for normal translocation of FER1L5 to the plasma membrane. Regulates the equilibrium between cell surface-associated and cell surface-dissociated caveolae by constraining caveolae at the cell membrane. The polypeptide is EH domain-containing protein 2 (Mus musculus (Mouse)).